Here is a 197-residue protein sequence, read N- to C-terminus: DnaJ homolog subfamily C member 5 (197 aa).

The J domain maps to 13-82 (GESLYHVLGL…RNIYDKYGSL (70 aa)). Positions 153–197 (EDLEAQMQSDERDTEGPVLVQPASATETTQLTSDSHASYHTDGFN) are disordered. Residues 175-197 (ASATETTQLTSDSHASYHTDGFN) are compositionally biased toward polar residues.

Palmitoylated. Palmitoylation occurs probably in the cysteine-rich domain and regulates DNAJC5 stable membrane attachment.

Its subcellular location is the cytoplasm. It localises to the cytosol. It is found in the membrane. The protein localises to the cytoplasmic vesicle. The protein resides in the secretory vesicle. Its subcellular location is the chromaffin granule membrane. It localises to the melanosome. It is found in the cell membrane. Functionally, may have an important role in presynaptic function. May be involved in calcium-dependent neurotransmitter release at nerve endings. The chain is DnaJ homolog subfamily C member 5 from Xenopus laevis (African clawed frog).